Here is a 194-residue protein sequence, read N- to C-terminus: Leucyl/phenylalanyl-tRNA--protein transferase (194 aa).

It belongs to the L/F-transferase family.

The protein localises to the cytoplasm. The enzyme catalyses N-terminal L-lysyl-[protein] + L-leucyl-tRNA(Leu) = N-terminal L-leucyl-L-lysyl-[protein] + tRNA(Leu) + H(+). It catalyses the reaction N-terminal L-arginyl-[protein] + L-leucyl-tRNA(Leu) = N-terminal L-leucyl-L-arginyl-[protein] + tRNA(Leu) + H(+). It carries out the reaction L-phenylalanyl-tRNA(Phe) + an N-terminal L-alpha-aminoacyl-[protein] = an N-terminal L-phenylalanyl-L-alpha-aminoacyl-[protein] + tRNA(Phe). In terms of biological role, functions in the N-end rule pathway of protein degradation where it conjugates Leu, Phe and, less efficiently, Met from aminoacyl-tRNAs to the N-termini of proteins containing an N-terminal arginine or lysine. The chain is Leucyl/phenylalanyl-tRNA--protein transferase from Chlorobium phaeobacteroides (strain DSM 266 / SMG 266 / 2430).